We begin with the raw amino-acid sequence, 488 residues long: 3-octaprenyl-4-hydroxybenzoate carboxy-lyase (488 aa).

A Mn(2+)-binding site is contributed by Asn172. Residues 175–177, 189–191, and 194–195 each bind prenylated FMN; these read IYR, RWL, and RG. Residue Glu238 coordinates Mn(2+). Residue Asp287 is the Proton donor of the active site.

This sequence belongs to the UbiD family. In terms of assembly, homohexamer. The cofactor is prenylated FMN. Mn(2+) serves as cofactor.

It is found in the cell membrane. It carries out the reaction a 4-hydroxy-3-(all-trans-polyprenyl)benzoate + H(+) = a 2-(all-trans-polyprenyl)phenol + CO2. The protein operates within cofactor biosynthesis; ubiquinone biosynthesis. Functionally, catalyzes the decarboxylation of 3-octaprenyl-4-hydroxy benzoate to 2-octaprenylphenol, an intermediate step in ubiquinone biosynthesis. The protein is 3-octaprenyl-4-hydroxybenzoate carboxy-lyase of Pseudomonas syringae pv. syringae (strain B728a).